A 92-amino-acid polypeptide reads, in one-letter code: uncharacterized protein (92 aa).

Residues 1-29 (MAAQTDYKKQVVGILLSLAFVLFVFSFSE) form the signal peptide.

This is an uncharacterized protein from Bacillus subtilis (strain 168).